We begin with the raw amino-acid sequence, 83 residues long: Sec-independent protein translocase protein TatA (83 aa).

A helical membrane pass occupies residues 1–21; that stretch reads MGSLSPWHWAILAVVVIVLFG. Residues 48–83 are disordered; sequence NENKAEASIETPTPVQSQRVDPSAASGQDSTEARPA. Positions 57–77 are enriched in polar residues; the sequence is ETPTPVQSQRVDPSAASGQDS.

It belongs to the TatA/E family. As to quaternary structure, the Tat system comprises two distinct complexes: a TatABC complex, containing multiple copies of TatA, TatB and TatC subunits, and a separate TatA complex, containing only TatA subunits. Substrates initially bind to the TatABC complex, which probably triggers association of the separate TatA complex to form the active translocon.

It is found in the cell membrane. In terms of biological role, part of the twin-arginine translocation (Tat) system that transports large folded proteins containing a characteristic twin-arginine motif in their signal peptide across membranes. TatA could form the protein-conducting channel of the Tat system. The chain is Sec-independent protein translocase protein TatA from Mycobacterium bovis (strain BCG / Pasteur 1173P2).